The chain runs to 363 residues: NADH-quinone oxidoreductase subunit H (363 aa).

Transmembrane regions (helical) follow at residues 29-49 (VLKILMIAIPLIVSVAFYVVW), 62-82 (GPMYVGMGLFQAFADVFKLLF), 94-114 (VIFVIAPLLTLAPSFAAWAVV), 127-147 (VGLLYLLAMTSLGVYGIILAG), 166-186 (VVSYEIAMGFALVGVMIAAGS), 202-222 (FFDWFLIPLFPLFIVYWVSGV), 239-257 (IVAGHMVEYSGSVFALFFL), 264-286 (ILVSFLISIFFLGGWLSPIQGWV), 293-313 (LIDWVWNGGWPWLLLKVLFFA), and 339-359 (FIPLTIVWIAVTALMVFSGVI).

This sequence belongs to the complex I subunit 1 family. NDH-1 is composed of 14 different subunits. Subunits NuoA, H, J, K, L, M, N constitute the membrane sector of the complex.

It localises to the cell inner membrane. The catalysed reaction is a quinone + NADH + 5 H(+)(in) = a quinol + NAD(+) + 4 H(+)(out). In terms of biological role, NDH-1 shuttles electrons from NADH, via FMN and iron-sulfur (Fe-S) centers, to quinones in the respiratory chain. The immediate electron acceptor for the enzyme in this species is believed to be ubiquinone. Couples the redox reaction to proton translocation (for every two electrons transferred, four hydrogen ions are translocated across the cytoplasmic membrane), and thus conserves the redox energy in a proton gradient. This subunit may bind ubiquinone. The protein is NADH-quinone oxidoreductase subunit H of Xylella fastidiosa (strain M12).